The chain runs to 88 residues: Putative septation protein SpoVG (88 aa).

It belongs to the SpoVG family.

Could be involved in septation. This chain is Putative septation protein SpoVG, found in Caldicellulosiruptor bescii (strain ATCC BAA-1888 / DSM 6725 / KCTC 15123 / Z-1320) (Anaerocellum thermophilum).